The sequence spans 137 residues: Nucleoside diphosphate kinase (137 aa).

ATP is bound by residues Lys-9, Phe-57, Arg-85, Thr-91, Arg-102, and Asn-112. Catalysis depends on His-115, which acts as the Pros-phosphohistidine intermediate.

It belongs to the NDK family. Homotetramer. Mg(2+) serves as cofactor.

The protein localises to the cytoplasm. The enzyme catalyses a 2'-deoxyribonucleoside 5'-diphosphate + ATP = a 2'-deoxyribonucleoside 5'-triphosphate + ADP. It catalyses the reaction a ribonucleoside 5'-diphosphate + ATP = a ribonucleoside 5'-triphosphate + ADP. In terms of biological role, major role in the synthesis of nucleoside triphosphates other than ATP. The ATP gamma phosphate is transferred to the NDP beta phosphate via a ping-pong mechanism, using a phosphorylated active-site intermediate. This Campylobacter concisus (strain 13826) protein is Nucleoside diphosphate kinase.